Here is a 511-residue protein sequence, read N- to C-terminus: 2,3-bisphosphoglycerate-independent phosphoglycerate mutase (511 aa).

Mn(2+) contacts are provided by Asp-14 and Ser-64. Ser-64 acts as the Phosphoserine intermediate in catalysis. Substrate is bound by residues His-125, 155–156, Arg-187, Arg-193, 259–262, and Lys-333; these read RD and RADR. Residues Asp-400, His-404, Asp-441, His-442, and His-460 each coordinate Mn(2+).

This sequence belongs to the BPG-independent phosphoglycerate mutase family. As to quaternary structure, monomer. Mn(2+) is required as a cofactor.

It carries out the reaction (2R)-2-phosphoglycerate = (2R)-3-phosphoglycerate. The protein operates within carbohydrate degradation; glycolysis; pyruvate from D-glyceraldehyde 3-phosphate: step 3/5. In terms of biological role, catalyzes the interconversion of 2-phosphoglycerate and 3-phosphoglycerate. This chain is 2,3-bisphosphoglycerate-independent phosphoglycerate mutase, found in Pseudomonas entomophila (strain L48).